A 105-amino-acid polypeptide reads, in one-letter code: uncharacterized protein (105 aa).

The tract at residues E47 to F105 is disordered. Positions R86–E95 are enriched in basic and acidic residues.

This is an uncharacterized protein from Bacillus subtilis (strain 168).